Consider the following 139-residue polypeptide: Putative pre-16S rRNA nuclease (139 aa).

This sequence belongs to the YqgF nuclease family.

The protein localises to the cytoplasm. Functionally, could be a nuclease involved in processing of the 5'-end of pre-16S rRNA. This Streptococcus pyogenes serotype M1 protein is Putative pre-16S rRNA nuclease.